The sequence spans 35 residues: Conotoxin TxMEKL-0422 (35 aa).

The tract at residues N1–C35 is disordered. Basic and acidic residues predominate over residues P21–C35.

Contains disulfide bonds. Expressed by the venom duct.

The protein resides in the secreted. In Conus textile (Cloth-of-gold cone), this protein is Conotoxin TxMEKL-0422.